We begin with the raw amino-acid sequence, 298 residues long: Mimecan (298 aa).

The signal sequence occupies residues Met-1–Ala-20. The N-linked (GlcNAc...) (keratan sulfate) asparagine glycan is linked to Asn-88. LRR repeat units follow at residues Asp-112–Ile-131, Lys-132–Ile-155, Glu-156–Leu-179, Leu-180–Ile-199, Lys-200–Leu-225, Glu-226–Ile-246, and Ala-247–Ile-277. An N-linked (GlcNAc...) (keratan sulfate) asparagine glycan is attached at Asn-214. Cys-255 and Cys-288 are joined by a disulfide. N-linked (GlcNAc...) (keratan sulfate) asparagine glycosylation is present at Asn-258.

It belongs to the small leucine-rich proteoglycan (SLRP) family. SLRP class III subfamily. In terms of processing, contains keratan sulfate.

The protein localises to the secreted. Its subcellular location is the extracellular space. It localises to the extracellular matrix. Induces bone formation in conjunction with TGF-beta-1 or TGF-beta-2. In Pongo abelii (Sumatran orangutan), this protein is Mimecan (OGN).